Reading from the N-terminus, the 193-residue chain is Adenine phosphoribosyltransferase (193 aa).

Belongs to the purine/pyrimidine phosphoribosyltransferase family. In terms of assembly, homodimer.

Its subcellular location is the cytoplasm. The catalysed reaction is AMP + diphosphate = 5-phospho-alpha-D-ribose 1-diphosphate + adenine. It functions in the pathway purine metabolism; AMP biosynthesis via salvage pathway; AMP from adenine: step 1/1. Its function is as follows. Catalyzes a salvage reaction resulting in the formation of AMP, that is energically less costly than de novo synthesis. The sequence is that of Adenine phosphoribosyltransferase from Bifidobacterium animalis subsp. lactis (strain AD011).